Consider the following 296-residue polypeptide: Farnesyl diphosphate synthase (296 aa).

Residues Lys-46, Arg-49, and His-78 each contribute to the isopentenyl diphosphate site. Asp-85 and Asp-91 together coordinate Mg(2+). (2E)-geranyl diphosphate is bound at residue Arg-96. Isopentenyl diphosphate is bound at residue Arg-97. Residues Lys-182, Thr-183, Gln-220, and Lys-237 each coordinate (2E)-geranyl diphosphate.

The protein belongs to the FPP/GGPP synthase family. Mg(2+) is required as a cofactor.

Its subcellular location is the cytoplasm. The enzyme catalyses isopentenyl diphosphate + (2E)-geranyl diphosphate = (2E,6E)-farnesyl diphosphate + diphosphate. This chain is Farnesyl diphosphate synthase (ispA), found in Bacillus subtilis (strain 168).